A 104-amino-acid chain; its full sequence is MTETSTAKVATTKKSTTTRKPFSLQGVITHSSSRTIIKAPERLADQPPVASKVVRKKSTTTVKPTTAIKKKVEKKKVVALKKTASASSSGKKVVASKKKVVAKK.

Disordered stretches follow at residues 1 to 20 (MTETSTAKVATTKKSTTTRK) and 83 to 104 (TASASSSGKKVVASKKKVVAKK). Residues 83-93 (TASASSSGKKV) show a composition bias toward low complexity. Residues 94-104 (VASKKKVVAKK) show a composition bias toward basic residues.

This is an uncharacterized protein from Dictyostelium discoideum (Social amoeba).